The following is a 528-amino-acid chain: Protein WHAT'S THIS FACTOR 1 homolog, chloroplastic (528 aa).

A chloroplast-targeting transit peptide spans 1 to 73 (MEPKLLLSAH…KTRVVVEPVR (73 aa)). The PORR domain occupies 80-408 (KELTFDSVVQ…VKEKMRALVS (329 aa)). Residues 410 to 528 (PRFPRRGGPR…FPDGTPREKW (119 aa)) form a disordered region. A compositionally biased stretch (basic and acidic residues) spans 418-428 (PRKDEEGREVE). Residues 429-491 (IDGSDADGEE…DDDDEDEEED (63 aa)) are compositionally biased toward acidic residues.

It localises to the plastid. The protein localises to the chloroplast. RNA-binding protein involved in group II intron splicing. Binds specific group II introns and promotes their splicing. Functions in the context of a heterodimer with the ribonuclease III domain-containing protein RNC1. The protein is Protein WHAT'S THIS FACTOR 1 homolog, chloroplastic of Arabidopsis thaliana (Mouse-ear cress).